The chain runs to 1131 residues: Protein TOPLESS (1131 aa).

Residues 4 to 36 enclose the LisH domain; sequence LSRELVFLILQFLDEEKFKETVHKLEQESGFFF. The region spanning 34 to 92 is the CTLH domain; it reads FFFNMKYFEDEVHNGNWDEVEKYLSGFTKVDDNRYSMKIFFEIRKQKYLEALDKHDRPK. S214 carries the post-translational modification Phosphoserine. The tract at residues 286-305 is disordered; the sequence is TPPTNASLDYPSADSEHVSK. 15 WD repeats span residues 353 to 393, 415 to 454, 460 to 501, 504 to 545, 548 to 591, 595 to 634, 639 to 678, 710 to 756, 766 to 805, 833 to 871, 874 to 914, 917 to 956, 967 to 1005, 1010 to 1049, and 1060 to 1102; these read SQGS…RLVQ, EPVV…DMRQ, AHVG…KRHT, GHEA…SRVD, APGR…VKRT, FHKR…LLTA, GGLQ…RLLH, DRSA…EPSQ, LRVA…RNAT, NPEE…TMAT, PPPP…VKSK, GHSK…KQRS, NSAP…CMKQ, ESLA…LRCR, and LSNS…GKWG. Positions 1100-1131 are disordered; it reads KWGVAPPAENGSASGAPTAPSVGASASDQPQR.

As to quaternary structure, tetramer. Homodimer. Interacts (via the LisH domain) with WUS (via the C-terminal domain). Interacts with NINJA/AFPH2. Interacts with IAA1; IAA2; IAA3; IAA4; IAA6; IAA8; IAA9; IAA11; IAA13; IAA14; IAA17; IAA18; IAA26; IAA27 and IAA28. Interacts (via the LisH domain) with IAA12/BDL (via domain I). Can form a complex with IAA12 and ARF5. Interacts with AP2 (via EAR motif) and HDA19. Interacts with TIFY5A/JAZ8 (via EAR motif). Interacts with SPEAR3/TIE1. Interacts with SPL (via EAR motif). Interacts with ZAT2 and ZAT3 (via the EAR motif). Interacts with JAZ13 (via EAR motif). Interacts with GIR1 and GIR2. In terms of tissue distribution, expressed in embryo and in extraembryonic tissues. Expressed in inflorescences, flowers, floral meristems, developing anthers and ovules. Detected in the vascular tissues, shoot apical meristem, cotyledons and young leaves. Expressed ubiquitously in the pistils, stamens and pollens.

It is found in the nucleus. Its function is as follows. Transcriptional corepressor. May repress the expression of root-promoting genes in the top half of the embryo to allow proper differentiation of the shoot pole during the transition stage of embryogenesis. Regulates the expression of PLT1 and PLT2. Negative regulator of jasmonate responses. Negative regulator of auxin responses. Negative regulator of multiple floral organ identity genes. Required for ovule development. The sequence is that of Protein TOPLESS (TPL) from Arabidopsis thaliana (Mouse-ear cress).